Here is a 183-residue protein sequence, read N- to C-terminus: uncharacterized protein (183 aa).

The protein belongs to the asfivirus S183L family.

This is an uncharacterized protein from Ornithodoros (relapsing fever ticks).